The sequence spans 102 residues: Outer membrane protein assembly factor BamE (102 aa).

The N-terminal stretch at 1–20 (MNNYIKALLIIICFSSCSIS) is a signal peptide.

This sequence belongs to the BamE family. As to quaternary structure, part of the Bam complex.

The protein resides in the cell outer membrane. In terms of biological role, part of the outer membrane protein assembly complex, which is involved in assembly and insertion of beta-barrel proteins into the outer membrane. The chain is Outer membrane protein assembly factor BamE from Buchnera aphidicola subsp. Acyrthosiphon pisum (strain APS) (Acyrthosiphon pisum symbiotic bacterium).